A 431-amino-acid chain; its full sequence is Adenylosuccinate lyase (431 aa).

N(6)-(1,2-dicarboxyethyl)-AMP-binding positions include 4-5 (RY), 67-69 (RHD), and 93-94 (TS). H141 acts as the Proton donor/acceptor in catalysis. N(6)-(1,2-dicarboxyethyl)-AMP is bound at residue Q212. S262 functions as the Proton donor/acceptor in the catalytic mechanism. N(6)-(1,2-dicarboxyethyl)-AMP-binding positions include S263, 268 to 270 (KRN), N276, and 307 to 311 (SAERI).

This sequence belongs to the lyase 1 family. Adenylosuccinate lyase subfamily. As to quaternary structure, homodimer and homotetramer. Residues from neighboring subunits contribute catalytic and substrate-binding residues to each active site.

The enzyme catalyses N(6)-(1,2-dicarboxyethyl)-AMP = fumarate + AMP. It catalyses the reaction (2S)-2-[5-amino-1-(5-phospho-beta-D-ribosyl)imidazole-4-carboxamido]succinate = 5-amino-1-(5-phospho-beta-D-ribosyl)imidazole-4-carboxamide + fumarate. It functions in the pathway purine metabolism; AMP biosynthesis via de novo pathway; AMP from IMP: step 2/2. It participates in purine metabolism; IMP biosynthesis via de novo pathway; 5-amino-1-(5-phospho-D-ribosyl)imidazole-4-carboxamide from 5-amino-1-(5-phospho-D-ribosyl)imidazole-4-carboxylate: step 2/2. Catalyzes two reactions in de novo purine nucleotide biosynthesis. Catalyzes the breakdown of 5-aminoimidazole- (N-succinylocarboxamide) ribotide (SAICAR or 2-[5-amino-1-(5-phospho-beta-D-ribosyl)imidazole-4-carboxamido]succinate) to 5-aminoimidazole-4-carboxamide ribotide (AICAR or 5-amino-1-(5-phospho-beta-D-ribosyl)imidazole-4-carboxamide) and fumarate, and of adenylosuccinate (ADS or N(6)-(1,2-dicarboxyethyl)-AMP) to adenosine monophosphate (AMP) and fumarate. This chain is Adenylosuccinate lyase (purB), found in Staphylococcus epidermidis (strain ATCC 35984 / DSM 28319 / BCRC 17069 / CCUG 31568 / BM 3577 / RP62A).